We begin with the raw amino-acid sequence, 1465 residues long: DNA polymerase III PolC-type (1465 aa).

Positions 427–583 constitute an Exonuclease domain; that stretch reads YVVFDVETTG…YDAEATGRLL (157 aa).

This sequence belongs to the DNA polymerase type-C family. PolC subfamily.

It is found in the cytoplasm. It catalyses the reaction DNA(n) + a 2'-deoxyribonucleoside 5'-triphosphate = DNA(n+1) + diphosphate. Required for replicative DNA synthesis. This DNA polymerase also exhibits 3' to 5' exonuclease activity. This chain is DNA polymerase III PolC-type, found in Streptococcus pyogenes serotype M6 (strain ATCC BAA-946 / MGAS10394).